Here is a 137-residue protein sequence, read N- to C-terminus: Bombinin-like peptides 1 (137 aa).

The signal sequence occupies residues 1–18 (MNFKYIVAVSILIASAYA). Asparagine 70 is modified (asparagine amide). Residues 91 to 112 (LDSFEHPEEASEKETRGFNQEE) are disordered. Residue isoleucine 118 is modified to D-allo-isoleucine. Position 136 is an isoleucine amide (isoleucine 136).

This sequence belongs to the bombinin family. In terms of tissue distribution, expressed by the skin glands.

It is found in the secreted. In terms of biological role, has antimicrobial activity, but no hemolytic activity. Preliminary evidence indicates that this peptide does not lyse and thus kill the bacteria by its antimicrobial activity. Its function is as follows. Bombinin H has antibacterial and hemolytic activity. This is Bombinin-like peptides 1 from Bombina variegata (Yellow-bellied toad).